The chain runs to 130 residues: Small ribosomal subunit protein uS8 (130 aa).

It belongs to the universal ribosomal protein uS8 family. Part of the 30S ribosomal subunit. Contacts proteins S5 and S12.

Its function is as follows. One of the primary rRNA binding proteins, it binds directly to 16S rRNA central domain where it helps coordinate assembly of the platform of the 30S subunit. The sequence is that of Small ribosomal subunit protein uS8 from Vibrio atlanticus (strain LGP32) (Vibrio splendidus (strain Mel32)).